A 535-amino-acid chain; its full sequence is Sterol 26-hydroxylase, mitochondrial (535 aa).

Residues Met-1–Thr-36 constitute a mitochondrion transit peptide. Residue Lys-286 is modified to N6-acetyllysine. A sterol-binding region spans residues Pro-387–Pro-401. Cys-480 contacts heme. Lys-524 carries the N6-acetyllysine modification.

The protein belongs to the cytochrome P450 family. As to quaternary structure, interacts with HSP70; this interaction is required for initial targeting to mitochondria. The cofactor is heme. Expressed in all tissues tested. Highest expression in liver and duodenum, followed by adrenal gland and lung. Low expression in kidney and spleen.

The protein localises to the mitochondrion inner membrane. The catalysed reaction is 5beta-cholestane-3alpha,7alpha,12alpha-triol + 6 reduced [adrenodoxin] + 3 O2 + 5 H(+) = (25R)-3alpha,7alpha,12alpha-trihydroxy-5beta-cholestan-26-oate + 6 oxidized [adrenodoxin] + 4 H2O. The enzyme catalyses cholestanol + 2 reduced [adrenodoxin] + O2 + 2 H(+) = (25R)-26-hydroxycholestanol + 2 oxidized [adrenodoxin] + H2O. It carries out the reaction (25R)-3beta-hydroxycholest-5-en-7-one-26-al + 2 reduced [adrenodoxin] + O2 + H(+) = (25R)-3beta-hydroxycholest-5-en-7-one-26-oate + 2 oxidized [adrenodoxin] + H2O. It catalyses the reaction (25R)-3beta,26-dihydroxycholest-5-en-7-one + 2 reduced [adrenodoxin] + O2 + 2 H(+) = (25R)-3beta-hydroxycholest-5-en-7-one-26-al + 2 oxidized [adrenodoxin] + 2 H2O. The catalysed reaction is 7-oxocholesterol + 2 reduced [adrenodoxin] + O2 + 2 H(+) = (25R)-3beta,26-dihydroxycholest-5-en-7-one + 2 oxidized [adrenodoxin] + H2O. The enzyme catalyses calciol + 2 reduced [adrenodoxin] + O2 + 2 H(+) = calcidiol + 2 oxidized [adrenodoxin] + H2O. It carries out the reaction (25R)-5beta-cholestane-3alpha,7alpha,12alpha,26-tetrol + 2 reduced [adrenodoxin] + O2 + 2 H(+) = (25R)-3alpha,7alpha,12alpha-trihydroxy-5beta-cholestan-26-al + 2 oxidized [adrenodoxin] + 2 H2O. It catalyses the reaction 2 reduced [adrenodoxin] + cholesterol + O2 + 2 H(+) = (25R)-cholest-5-ene-3beta,26-diol + 2 oxidized [adrenodoxin] + H2O. The catalysed reaction is (25R)-3beta,4beta-dihydroxycholest-5-en-26-al + 2 reduced [adrenodoxin] + O2 + H(+) = (25R)-3beta,4beta-dihydroxycholest-5-en-26-oate + 2 oxidized [adrenodoxin] + H2O. The enzyme catalyses (25R)-4beta,26-dihydroxycholesterol + 2 reduced [adrenodoxin] + O2 + 2 H(+) = (25R)-3beta,4beta-dihydroxycholest-5-en-26-al + 2 oxidized [adrenodoxin] + 2 H2O. It carries out the reaction 4beta-hydroxycholesterol + 2 reduced [adrenodoxin] + O2 + 2 H(+) = (25R)-4beta,26-dihydroxycholesterol + 2 oxidized [adrenodoxin] + H2O. It catalyses the reaction (25R)-3beta-hydroxy-5-cholesten-26-al + 2 reduced [adrenodoxin] + O2 + H(+) = (25R)-3beta-hydroxy-5-cholestenoate + 2 oxidized [adrenodoxin] + H2O. The catalysed reaction is (25R)-cholest-5-ene-3beta,26-diol + 2 reduced [adrenodoxin] + O2 + 2 H(+) = (25R)-3beta-hydroxy-5-cholesten-26-al + 2 oxidized [adrenodoxin] + 2 H2O. The enzyme catalyses (25R)-3alpha,7alpha,12alpha-trihydroxy-5beta-cholestan-26-al + 2 reduced [adrenodoxin] + O2 + H(+) = (25R)-3alpha,7alpha,12alpha-trihydroxy-5beta-cholestan-26-oate + 2 oxidized [adrenodoxin] + H2O. It carries out the reaction 5beta-cholestane-3alpha,7alpha,12alpha-triol + 2 reduced [adrenodoxin] + O2 + 2 H(+) = (25R)-5beta-cholestane-3alpha,7alpha,12alpha,26-tetrol + 2 oxidized [adrenodoxin] + H2O. It participates in hormone biosynthesis; cholecalciferol biosynthesis. Its pathway is steroid metabolism; cholesterol degradation. It functions in the pathway lipid metabolism; bile acid biosynthesis. In terms of biological role, cytochrome P450 monooxygenase that catalyzes regio- and stereospecific hydroxylation of cholesterol and its derivatives. Hydroxylates (with R stereochemistry) the terminal methyl group of cholesterol side-chain in a three step reaction to yield at first a C26 alcohol, then a C26 aldehyde and finally a C26 acid. Regulates cholesterol homeostasis by catalyzing the conversion of excess cholesterol to bile acids via both the 'neutral' (classic) and the 'acid' (alternative) pathways. May also regulate cholesterol homeostasis via generation of active oxysterols, which act as ligands for NR1H2 and NR1H3 nuclear receptors, modulating the transcription of genes involved in lipid metabolism. Plays a role in cholestanol metabolism in the cerebellum. Similarly to cholesterol, hydroxylates cholestanol and may facilitate sterol diffusion through the blood-brain barrier to the systemic circulation for further degradation. Also hydroxylates retinal 7-ketocholesterol, a noxious oxysterol with pro-inflammatory and pro-apoptotic effects, and may play a role in its elimination from the retinal pigment epithelium. May play a redundant role in vitamin D biosynthesis. Catalyzes 25-hydroxylation of vitamin D3 that is required for its conversion to a functionally active form. This chain is Sterol 26-hydroxylase, mitochondrial (CYP27A1), found in Oryctolagus cuniculus (Rabbit).